The sequence spans 177 residues: Large ribosomal subunit protein uL6 (177 aa).

This sequence belongs to the universal ribosomal protein uL6 family. Part of the 50S ribosomal subunit.

This protein binds to the 23S rRNA, and is important in its secondary structure. It is located near the subunit interface in the base of the L7/L12 stalk, and near the tRNA binding site of the peptidyltransferase center. In Variovorax paradoxus (strain S110), this protein is Large ribosomal subunit protein uL6.